Reading from the N-terminus, the 444-residue chain is 3-phosphoshikimate 1-carboxyvinyltransferase (444 aa).

3-phosphoshikimate is bound by residues Lys32, Ser33, and Arg37. Residue Lys32 participates in phosphoenolpyruvate binding. Residues Gly105 and Arg133 each coordinate phosphoenolpyruvate. Residues Ser178, Gln180, Asp326, and Lys353 each coordinate 3-phosphoshikimate. Gln180 provides a ligand contact to phosphoenolpyruvate. Asp326 acts as the Proton acceptor in catalysis. Phosphoenolpyruvate contacts are provided by Arg357 and Arg398.

This sequence belongs to the EPSP synthase family. In terms of assembly, monomer.

The protein localises to the cytoplasm. It carries out the reaction 3-phosphoshikimate + phosphoenolpyruvate = 5-O-(1-carboxyvinyl)-3-phosphoshikimate + phosphate. It participates in metabolic intermediate biosynthesis; chorismate biosynthesis; chorismate from D-erythrose 4-phosphate and phosphoenolpyruvate: step 6/7. In terms of biological role, catalyzes the transfer of the enolpyruvyl moiety of phosphoenolpyruvate (PEP) to the 5-hydroxyl of shikimate-3-phosphate (S3P) to produce enolpyruvyl shikimate-3-phosphate and inorganic phosphate. The protein is 3-phosphoshikimate 1-carboxyvinyltransferase of Nitrosococcus oceani (strain ATCC 19707 / BCRC 17464 / JCM 30415 / NCIMB 11848 / C-107).